Consider the following 311-residue polypeptide: Cell division protein ZipA (311 aa).

Over 1 to 5 (MQELR) the chain is Periplasmic. A helical transmembrane segment spans residues 6–26 (FVLIVVGALAIMALLFHGLWT). At 27–311 (SKKEGKAKFG…QIVEFKAANA (285 aa)) the chain is on the cytoplasmic side. A compositionally biased stretch (basic and acidic residues) spans 32 to 54 (KAKFGDKPLSKLDLGESEPKESE). Residues 32-60 (KAKFGDKPLSKLDLGESEPKESEMYVAPE) are disordered.

Belongs to the ZipA family. Interacts with FtsZ via their C-terminal domains.

It is found in the cell inner membrane. Its function is as follows. Essential cell division protein that stabilizes the FtsZ protofilaments by cross-linking them and that serves as a cytoplasmic membrane anchor for the Z ring. Also required for the recruitment to the septal ring of downstream cell division proteins. The polypeptide is Cell division protein ZipA (Vibrio vulnificus (strain YJ016)).